An 834-amino-acid polypeptide reads, in one-letter code: MAP kinase phosphatase with leucine-rich repeats protein 1 (834 aa).

A disordered region spans residues 1-103 (MIFKKLFSKG…GSGTTKESKK (103 aa)). Over residues 36–78 (GSGTNTNGLSNSTTNPSSIHSTPTTPTTTASTNLTNSNKLSTL) the composition is skewed to low complexity. Positions 79-98 (APITNGNRSLRGSKDGSGTT) are enriched in polar residues. 10 LRR repeats span residues 160–181 (ELRS…IGLL), 183–204 (NLKH…LSQL), 206–226 (SLES…NICK), 229–251 (SLTL…INLE), 252–273 (NLKD…LPNN), 274–292 (IEKL…SKSL), 298–319 (SLTT…LSCL), 321–342 (NVKT…VLGS), 345–366 (SLVT…IVTL), and 368–389 (NLRI…PSSE). The disordered stretch occupies residues 503–584 (YEKQENDENN…ENPLKESQGK (82 aa)). Residues 511-536 (NNSVTLETTTTISIASDNTDEASIQI) show a composition bias toward polar residues. Basic and acidic residues-rich tracts occupy residues 538-554 (QKED…DKLL) and 569-582 (KQQE…KESQ). Positions 555–615 (QESFSENNNN…IRLEKIKYQE (61 aa)) form a coiled coil. Positions 695–834 (VPDLIIDKLY…LKKFEKDLSK (140 aa)) constitute a Tyrosine-protein phosphatase domain. Cysteine 778 serves as the catalytic Phosphocysteine intermediate.

The protein belongs to the protein-tyrosine phosphatase family. Non-receptor class dual specificity subfamily.

It catalyses the reaction O-phospho-L-tyrosyl-[protein] + H2O = L-tyrosyl-[protein] + phosphate. It carries out the reaction O-phospho-L-seryl-[protein] + H2O = L-seryl-[protein] + phosphate. The enzyme catalyses O-phospho-L-threonyl-[protein] + H2O = L-threonyl-[protein] + phosphate. Probable phosphatase with dual specificity toward Ser/Thr and Tyr-containing proteins. Dephosphorylates pNPP, in vitro. Essential for proper regulation of erkB (erk2) and optimal motility during development. The polypeptide is MAP kinase phosphatase with leucine-rich repeats protein 1 (mpl1) (Dictyostelium discoideum (Social amoeba)).